The sequence spans 190 residues: Pyridoxal 5'-phosphate synthase subunit PdxT (190 aa).

Residue 46–48 (GES) coordinates L-glutamine. Cysteine 78 serves as the catalytic Nucleophile. L-glutamine is bound by residues arginine 108 and 137 to 138 (IR). Active-site charge relay system residues include histidine 174 and glutamate 176.

It belongs to the glutaminase PdxT/SNO family. In the presence of PdxS, forms a dodecamer of heterodimers. Only shows activity in the heterodimer.

The enzyme catalyses aldehydo-D-ribose 5-phosphate + D-glyceraldehyde 3-phosphate + L-glutamine = pyridoxal 5'-phosphate + L-glutamate + phosphate + 3 H2O + H(+). The catalysed reaction is L-glutamine + H2O = L-glutamate + NH4(+). The protein operates within cofactor biosynthesis; pyridoxal 5'-phosphate biosynthesis. Functionally, catalyzes the hydrolysis of glutamine to glutamate and ammonia as part of the biosynthesis of pyridoxal 5'-phosphate. The resulting ammonia molecule is channeled to the active site of PdxS. The chain is Pyridoxal 5'-phosphate synthase subunit PdxT from Chloroflexus aggregans (strain MD-66 / DSM 9485).